The following is a 184-amino-acid chain: Ribosome-recycling factor (184 aa).

Positions 141–165 (DEKNGDITEDDLRSQTDDVQKATDN) are disordered.

The protein belongs to the RRF family.

The protein localises to the cytoplasm. In terms of biological role, responsible for the release of ribosomes from messenger RNA at the termination of protein biosynthesis. May increase the efficiency of translation by recycling ribosomes from one round of translation to another. This is Ribosome-recycling factor from Staphylococcus epidermidis (strain ATCC 35984 / DSM 28319 / BCRC 17069 / CCUG 31568 / BM 3577 / RP62A).